The sequence spans 85 residues: Neurotoxin 60.35 (85 aa).

The first 23 residues, Met-1–Gly-23, serve as a signal peptide directing secretion. The LCN-type CS-alpha/beta domain maps to Tyr-24 to Cys-85. Disulfide bonds link Cys-38/Cys-60, Cys-46/Cys-65, and Cys-50/Cys-67.

The protein belongs to the long (3 C-C) scorpion toxin superfamily. Expressed by the venom gland.

It is found in the secreted. This chain is Neurotoxin 60.35, found in Lychas mucronatus (Chinese swimming scorpion).